A 738-amino-acid polypeptide reads, in one-letter code: Ethylene receptor 1 (738 aa).

A run of 3 helical transmembrane segments spans residues 23–43, 53–73, and 92–112; these read ISDF…IYFV, WVLV…LINL, and VLTA…IPDL. Residues Cys-65 and His-69 each contribute to the Cu cation site. Positions 158–307 constitute a GAF domain; sequence DRHTILKTTL…VVADQVAVAL (150 aa). Residues 350–585 enclose the Histidine kinase domain; sequence VMNHEMRTPM…IFDVKLGISE (236 aa). At His-353 the chain carries Phosphohistidine; by autocatalysis. Residues 470-473, Asp-513, Lys-529, Ser-544, and Leu-548 contribute to the ADP site; that span reads NAVK. One can recognise a Response regulatory domain in the interval 611 to 729; the sequence is KVLVMDENGV…NIRDVLSDLL (119 aa). Asp-659 bears the 4-aspartylphosphate mark. Lys-714 participates in a covalent cross-link: Glycyl lysine isopeptide (Lys-Gly) (interchain with G-Cter in ubiquitin).

The protein belongs to the ethylene receptor family. Homodimer; disulfide-linked. Heteromer with ERS1, ERS2, ETR2 and EIN4. Interacts with AHP1, AHP2 and AHP3. Interacts with RTE1. Interacts with EIN2. Cu cation is required as a cofactor. Post-translationally, autophosphorylated. Phosphorylation at His-353 modulates the interaction with EIN2. Leaves, roots, stems, seedlings, flowers, anthers, carpels and ovules.

It is found in the endoplasmic reticulum membrane. The catalysed reaction is ATP + protein L-histidine = ADP + protein N-phospho-L-histidine.. Its function is as follows. Ethylene receptor related to bacterial two-component regulators. Acts as a redundant negative regulator of ethylene signaling. In the presence of ethylene, the auto-kinase activity of ETR1 is inhibited and the non-phosphorylated kinase domain binds tightly to the corresponding domain of EIN2. This Arabidopsis thaliana (Mouse-ear cress) protein is Ethylene receptor 1.